Reading from the N-terminus, the 715-residue chain is Fatty acid oxidation complex subunit alpha (715 aa).

Positions 1–190 are enoyl-CoA hydratase; sequence MDMTSAFTLN…RVGLVDEVVP (190 aa). The 3-hydroxyacyl-CoA dehydrogenase stretch occupies residues 306–715; sequence GPLASVGVLG…WNSGETDLKE (410 aa).

It in the N-terminal section; belongs to the enoyl-CoA hydratase/isomerase family. In the central section; belongs to the 3-hydroxyacyl-CoA dehydrogenase family. Heterotetramer of two alpha chains (FadJ) and two beta chains (FadI).

Its subcellular location is the cytoplasm. It carries out the reaction a (3S)-3-hydroxyacyl-CoA = a (2E)-enoyl-CoA + H2O. It catalyses the reaction a 4-saturated-(3S)-3-hydroxyacyl-CoA = a (3E)-enoyl-CoA + H2O. The enzyme catalyses a (3S)-3-hydroxyacyl-CoA + NAD(+) = a 3-oxoacyl-CoA + NADH + H(+). The catalysed reaction is (3S)-3-hydroxybutanoyl-CoA = (3R)-3-hydroxybutanoyl-CoA. It functions in the pathway lipid metabolism; fatty acid beta-oxidation. Its function is as follows. Catalyzes the formation of a hydroxyacyl-CoA by addition of water on enoyl-CoA. Also exhibits 3-hydroxyacyl-CoA epimerase and 3-hydroxyacyl-CoA dehydrogenase activities. The protein is Fatty acid oxidation complex subunit alpha of Citrobacter koseri (strain ATCC BAA-895 / CDC 4225-83 / SGSC4696).